The sequence spans 910 residues: Eukaryotic translation initiation factor 3 subunit C (910 aa).

A disordered region spans residues Met-1 to Gln-21. The segment covering Ser-11 to Ile-20 has biased composition (acidic residues). Ser-34, Ser-165, Ser-176, and Ser-185 each carry phosphoserine. A disordered region spans residues Phe-157–Glu-281. Residues Asp-162–Asp-186 show a composition bias toward acidic residues. Over residues Glu-193–Ala-207 the composition is skewed to low complexity. Over residues Ala-209–Asn-235 the composition is skewed to acidic residues. Residues Met-240–Val-268 show a composition bias toward basic and acidic residues. The 177-residue stretch at Phe-639–Pro-815 folds into the PCI domain. The disordered stretch occupies residues Phe-847–Glu-910. Over residues Asn-862 to Gly-874 the composition is skewed to low complexity. Residues Arg-882–Lys-891 show a composition bias toward basic residues. Over residues Asp-895–Glu-910 the composition is skewed to low complexity.

It belongs to the eIF-3 subunit C family. Component of the eukaryotic translation initiation factor 3 (eIF-3) complex. The eIF-3 complex interacts with pix.

Its subcellular location is the cytoplasm. Component of the eukaryotic translation initiation factor 3 (eIF-3) complex, which is involved in protein synthesis of a specialized repertoire of mRNAs and, together with other initiation factors, stimulates binding of mRNA and methionyl-tRNAi to the 40S ribosome. The eIF-3 complex specifically targets and initiates translation of a subset of mRNAs involved in cell proliferation. The protein is Eukaryotic translation initiation factor 3 subunit C of Drosophila yakuba (Fruit fly).